Here is a 712-residue protein sequence, read N- to C-terminus: MQYSLLSAQLRCSRFLLRQQAPFINRCYSDDIRNIGILAHIDAGKTTTTERMLYYAGKTRSLGEVHRGNTVTDYLTQERERGITICSSAVTFAWNGKRINLLDTPGHIDFTMEVEQSLYAVDGVIVVLDGTAGVEAQTVTVWTQADNHRLPRLVFVNKMDRSDAIFDKCIDDLKAKLDAKPICTQLPAKNVDGQLGIYDVITLEQLTWQQNDFGRTYSINKLESSSEIRELREKRNELIDQLSGVDDELAEVVISTESFDKVSNELIVQALRRATCQQKVVPVLLGSAYKNIGIQRVMDAVNAYLPTPNERNQIYNCFGGELKRGMRVLSSRGQAEVISKIYEPLADEYREVSSVRAGDVAICAGLKSTVTGDLLTTSHTSLKNAQKRLIQSLDATSPQYDEDEVDVNQELFSIEPKIPDAVYFCSIEPPSLSTQTAMEQALKQLQREDPSLRVNYDTVTGQTVLGGMGELHMEIIKSRLLSEYKIDVDLGPLQIAYKEAIETPAITTLSVEKDIAGSKQNVNITLQLTNNQTELFSLDKSPENVQNLNALRPRVLQVLRKGAIGALERGPRVGGQVVDTQIRLHNVTVGRGTADSFVMAAAAQCVQKLLSKSGTRLLEPIMAMQIVAPNERVSGIIADLSRRRALIKDVMPKGDRNKLILVNAPLAELSGYSSALRTISSGTASMTMQPCGFSEMNAADETLAVRRAQGLD.

The transit peptide at methionine 1–tyrosine 28 directs the protein to the mitochondrion. One can recognise a tr-type G domain in the interval aspartate 30–asparagine 309. GTP contacts are provided by residues alanine 39–threonine 46, aspartate 103–histidine 107, and asparagine 157–aspartate 160.

Belongs to the TRAFAC class translation factor GTPase superfamily. Classic translation factor GTPase family. EF-G/EF-2 subfamily.

It is found in the mitochondrion. In terms of biological role, mitochondrial GTPase that mediates the disassembly of ribosomes from messenger RNA at the termination of mitochondrial protein biosynthesis. Not involved in the GTP-dependent ribosomal translocation step during translation elongation. This Drosophila virilis (Fruit fly) protein is Ribosome-releasing factor 2, mitochondrial.